We begin with the raw amino-acid sequence, 430 residues long: Adenylosuccinate synthetase (430 aa).

GTP contacts are provided by residues 12-18 (GDEGKGK) and 40-42 (GHT). Catalysis depends on Asp-13, which acts as the Proton acceptor. Mg(2+) is bound by residues Asp-13 and Gly-40. IMP contacts are provided by residues 13–16 (DEGK), 38–41 (NAGH), Thr-129, Arg-143, Gln-223, Thr-238, and Arg-302. His-41 functions as the Proton donor in the catalytic mechanism. 298 to 304 (TTTGRPR) provides a ligand contact to substrate. GTP is bound by residues Arg-304, 330-332 (KLD), and 412-414 (SVG).

This sequence belongs to the adenylosuccinate synthetase family. As to quaternary structure, homodimer. Requires Mg(2+) as cofactor.

It localises to the cytoplasm. It carries out the reaction IMP + L-aspartate + GTP = N(6)-(1,2-dicarboxyethyl)-AMP + GDP + phosphate + 2 H(+). It functions in the pathway purine metabolism; AMP biosynthesis via de novo pathway; AMP from IMP: step 1/2. Functionally, plays an important role in the de novo pathway of purine nucleotide biosynthesis. Catalyzes the first committed step in the biosynthesis of AMP from IMP. This is Adenylosuccinate synthetase from Desulforudis audaxviator (strain MP104C).